Here is a 683-residue protein sequence, read N- to C-terminus: DNA polymerase alpha-associated DNA helicase A (683 aa).

Residue 229-236 participates in ATP binding; it reads GPPGTGKT.

The protein belongs to the DNA2/NAM7 helicase family. As to quaternary structure, associates with the hexameric DNA polymerase alpha.

The protein resides in the cytoplasm. It is found in the nucleus. It catalyses the reaction ATP + H2O = ADP + phosphate + H(+). DNA polymerase alpha-associated DNA helicase which may be involved in DNA replication. This Saccharomyces cerevisiae (strain ATCC 204508 / S288c) (Baker's yeast) protein is DNA polymerase alpha-associated DNA helicase A (HCS1).